A 477-amino-acid polypeptide reads, in one-letter code: Argininosuccinate synthase (477 aa).

Residues A17–S25 and A43 each bind ATP. Y99 provides a ligand contact to L-citrulline. ATP-binding residues include G129 and T131. T131, N135, and D136 together coordinate L-aspartate. N135 is an L-citrulline binding site. An ATP-binding site is contributed by D136. L-citrulline contacts are provided by R139 and S192. D194 serves as a coordination point for ATP. Residues T201, E203, and E280 each contribute to the L-citrulline site. The disordered stretch occupies residues D450–D477. Residues D468–D477 show a composition bias toward low complexity.

Belongs to the argininosuccinate synthase family. Type 2 subfamily. In terms of assembly, homotetramer.

Its subcellular location is the cytoplasm. It carries out the reaction L-citrulline + L-aspartate + ATP = 2-(N(omega)-L-arginino)succinate + AMP + diphosphate + H(+). It participates in amino-acid biosynthesis; L-arginine biosynthesis; L-arginine from L-ornithine and carbamoyl phosphate: step 2/3. The polypeptide is Argininosuccinate synthase (Nocardioides sp. (strain ATCC BAA-499 / JS614)).